Consider the following 353-residue polypeptide: Ribosome biogenesis protein BRX1 homolog (353 aa).

Residues 1-10 (MAATKRKRRG) show a composition bias toward basic residues. The tract at residues 1-46 (MAATKRKRRGGLAVQAKKLKRDAKDGKLPAKANDVSEEAAEEEKDR) is disordered. The region spanning 60 to 249 (ERILIFSSRG…LIKIFQGSFG (190 aa)) is the Brix domain. K160 participates in a covalent cross-link: Glycyl lysine isopeptide (Lys-Gly) (interchain with G-Cter in SUMO2). S261 is subject to Phosphoserine. Position 276 is an N6-acetyllysine (K276). Residues K314 and K322 each participate in a glycyl lysine isopeptide (Lys-Gly) (interchain with G-Cter in SUMO2) cross-link.

The protein belongs to the BRX1 family.

It is found in the nucleus. The protein localises to the nucleolus. Its function is as follows. Required for biogenesis of the 60S ribosomal subunit. The protein is Ribosome biogenesis protein BRX1 homolog (BRIX1) of Bos taurus (Bovine).